Here is a 756-residue protein sequence, read N- to C-terminus: Hormone-sensitive lipase (756 aa).

The short motif at 350 to 352 (HGG) is the Involved in the stabilization of the negatively charged intermediate by the formation of the oxyanion hole element. Residue S424 is part of the active site. 2 disordered regions span residues 542 to 570 (SVSK…TDSL) and 581 to 600 (RNSS…ETLG). A Phosphoserine; by PKA modification is found at S552. A Phosphoserine; by AMPK modification is found at S554. Over residues 581 to 596 (RNSSDTTDTPELSLSA) the composition is skewed to polar residues. S595 and S649 each carry phosphoserine. Residues D692 and H722 contribute to the active site.

It belongs to the 'GDXG' lipolytic enzyme family. As to quaternary structure, monomer and homodimer. Interacts with CAVIN1 in the adipocyte cytoplasm. Interacts with PLIN5. In terms of processing, phosphorylation by AMPK reduces its translocation towards the lipid droplets.

The protein resides in the cell membrane. The protein localises to the membrane. Its subcellular location is the caveola. It localises to the cytoplasm. It is found in the cytosol. The protein resides in the lipid droplet. It carries out the reaction a diacylglycerol + H2O = a monoacylglycerol + a fatty acid + H(+). The enzyme catalyses a triacylglycerol + H2O = a diacylglycerol + a fatty acid + H(+). The catalysed reaction is a monoacylglycerol + H2O = glycerol + a fatty acid + H(+). It catalyses the reaction Hydrolyzes glycerol monoesters of long-chain fatty acids.. It carries out the reaction 1,2-di-(9Z-octadecenoyl)-glycerol + (9Z)-octadecenoate + H(+) = 1,2,3-tri-(9Z-octadecenoyl)-glycerol + H2O. The enzyme catalyses 2,3-di-(9Z)-octadecenoyl-sn-glycerol + H2O = 2-(9Z-octadecenoyl)-glycerol + (9Z)-octadecenoate + H(+). The catalysed reaction is cholesteryl (9Z-octadecenoate) + H2O = cholesterol + (9Z)-octadecenoate + H(+). It catalyses the reaction 1,2,3-tri-(9Z-octadecenoyl)-glycerol + H2O = di-(9Z)-octadecenoylglycerol + (9Z)-octadecenoate + H(+). It carries out the reaction all-trans-retinyl hexadecanoate + H2O = all-trans-retinol + hexadecanoate + H(+). The enzyme catalyses 1,2-di-(9Z-octadecenoyl)-glycerol + H2O = (9Z-octadecenoyl)-glycerol + (9Z)-octadecenoate + H(+). The catalysed reaction is 2-(5Z,8Z,11Z,14Z-eicosatetraenoyl)-glycerol + H2O = glycerol + (5Z,8Z,11Z,14Z)-eicosatetraenoate + H(+). It catalyses the reaction 1-(9Z-octadecenoyl)-glycerol + H2O = glycerol + (9Z)-octadecenoate + H(+). It carries out the reaction 2-(9Z-octadecenoyl)-glycerol + H2O = glycerol + (9Z)-octadecenoate + H(+). The enzyme catalyses 1-O-hexadecyl-2-acetyl-sn-glycerol + H2O = 1-O-hexadecyl-sn-glycerol + acetate + H(+). The catalysed reaction is 1,2-di-(9Z-octadecenoyl)-sn-glycerol + H2O = (9Z-octadecenoyl)-glycerol + (9Z)-octadecenoate + H(+). It catalyses the reaction 1,3-di-(9Z-octadecenoyl)-glycerol + H2O = 1-(9Z-octadecenoyl)-glycerol + (9Z)-octadecenoate + H(+). It carries out the reaction 1,2-di-(9Z-octadecenoyl)-glycerol + H2O = 2-(9Z-octadecenoyl)-glycerol + (9Z)-octadecenoate + H(+). Its pathway is glycerolipid metabolism; triacylglycerol degradation. Functionally, lipase with broad substrate specificity, catalyzing the hydrolysis of triacylglycerols (TAGs), diacylglycerols (DAGs), monoacylglycerols (MAGs), cholesteryl esters and retinyl esters. Shows a preferential hydrolysis of DAGs over TAGs and MAGs. Preferentially hydrolyzes fatty acid (FA) esters at the sn-3 position of the glycerol backbone in DAGs and FA esters at the sn-1 and sn-2 positions of the glycerol backbone in TAGs. Catalyzes the hydrolysis of 2-arachidonoylglycerol, an endocannabinoid and of 2-acetyl monoalkylglycerol ether, the penultimate precursor of the pathway for de novo synthesis of platelet-activating factor. In adipose tissue and heart, it primarily hydrolyzes stored triglycerides to free fatty acids, while in steroidogenic tissues, it principally converts cholesteryl esters to free cholesterol for steroid hormone production. This Bos taurus (Bovine) protein is Hormone-sensitive lipase (LIPE).